A 317-amino-acid polypeptide reads, in one-letter code: Probable cell division protein WhiA (317 aa).

A DNA-binding region (H-T-H motif) is located at residues 281–314 (TLKELGEMINPPIGKSGVNHRLRKLDQIADRERG).

Belongs to the WhiA family.

In terms of biological role, involved in cell division and chromosome segregation. The protein is Probable cell division protein WhiA of Alkaliphilus metalliredigens (strain QYMF).